Consider the following 434-residue polypeptide: Glutamyl-tRNA reductase (434 aa).

Residues 54–57 (TCNR), Ser113, 118–120 (EAQ), and Gln124 contribute to the substrate site. The Nucleophile role is filled by Cys55. Residue 193–198 (GGGEVS) participates in NADP(+) binding.

It belongs to the glutamyl-tRNA reductase family. As to quaternary structure, homodimer.

It catalyses the reaction (S)-4-amino-5-oxopentanoate + tRNA(Glu) + NADP(+) = L-glutamyl-tRNA(Glu) + NADPH + H(+). It functions in the pathway porphyrin-containing compound metabolism; protoporphyrin-IX biosynthesis; 5-aminolevulinate from L-glutamyl-tRNA(Glu): step 1/2. It participates in porphyrin-containing compound metabolism; chlorophyll biosynthesis. Catalyzes the NADPH-dependent reduction of glutamyl-tRNA(Glu) to glutamate 1-semialdehyde (GSA). The chain is Glutamyl-tRNA reductase from Chloroflexus aurantiacus (strain ATCC 29366 / DSM 635 / J-10-fl).